Here is a 134-residue protein sequence, read N- to C-terminus: Photosystem II lipoprotein Psb27 (134 aa).

An N-terminal signal peptide occupies residues 1 to 24 (MSFLKNQLSRLLALILVVAIGLTA). A lipid anchor (N-palmitoyl cysteine) is attached at Cys-25. Cys-25 carries the S-diacylglycerol cysteine lipid modification.

The protein belongs to the Psb27 family. As to quaternary structure, monomer. Forms a complex with a monomeric, partially assembled PSII. This is probably the complex in which D1 is assembled and/or replaced. Present in 6-10% of PSII complexes; mostly in monomeric PSII. These PSII do not evolve oxygen, do not have an assembled calcium-manganese-oxide cluster. Psb27-containing PSII seem to be assembly intermediates; a wild-type strain includes the intrinsic membrane proteins, Psb27, Pbs28, substoichiometric amounts of PsbO and PsbQ but no PsbU or PsbV, while a ctpA deletion mutant includes the intrinsic membrane proteins (D1 as precursor), Psb27, a very low amount of PsbO and PsbQ, but no PsbU or PsbV. Small amounts of Psb27 interact with the lumenal domain of CP43 (psbC) in wild-type and a ctpA mutant. A small amount can also be detected in monomeric and trimeric photosystem I (PSI), possibly via association with PsaB.

It localises to the cellular thylakoid membrane. Plays a role in the repair and/or biogenesis of the calcium-manganese-oxide cluster on the lumenal face of the thylakoid membrane. Photosystem II (PSII) complexes containing this protein are monomeric, are assembly intermediates lacking the calcium-manganese-oxide cluster and miss some of the lumenal subunits. Probably blocks binding of some of the small lumenal subunits. This chain is Photosystem II lipoprotein Psb27, found in Synechocystis sp. (strain ATCC 27184 / PCC 6803 / Kazusa).